Here is a 422-residue protein sequence, read N- to C-terminus: Sphingomyelin phosphodiesterase 2 (422 aa).

E49 is a Mg(2+) binding site. The Proton acceptor role is filled by H272. 2 consecutive transmembrane segments (helical) span residues 325-345 (ALFGYVMILGLSLLVLLCVLA) and 354-374 (AIMLWTPSVGLVLGAGAVYLF). The interval 397–422 (TETQDLGSEPHPTHCRQQEADRAEEK) is disordered. Over residues 412-422 (RQQEADRAEEK) the composition is skewed to basic and acidic residues.

The protein belongs to the neutral sphingomyelinase family. Mg(2+) is required as a cofactor.

Its subcellular location is the membrane. It catalyses the reaction a sphingomyelin + H2O = phosphocholine + an N-acylsphing-4-enine + H(+). The enzyme catalyses 1-O-octadecyl-sn-glycero-3-phosphocholine + H2O = 1-O-octadecyl-sn-glycerol + phosphocholine + H(+). It carries out the reaction an N-(acyl)-sphingosylphosphocholine + H2O = an N-acyl-sphingoid base + phosphocholine + H(+). The catalysed reaction is 1-hexadecanoyl-sn-glycero-3-phosphocholine + H2O = 1-hexadecanoyl-sn-glycerol + phosphocholine + H(+). It catalyses the reaction a sphingosylphosphocholine + H2O = a sphingoid base + phosphocholine + H(+). The enzyme catalyses 1-O-hexadecyl-sn-glycero-3-phosphocholine + H2O = 1-O-hexadecyl-sn-glycerol + phosphocholine + H(+). Its pathway is lipid metabolism; sphingolipid metabolism. In terms of biological role, catalyzes the hydrolysis of sphingomyelin to form ceramide and phosphocholine. Ceramide mediates numerous cellular functions, such as apoptosis and growth arrest, and is capable of regulating these 2 cellular events independently. Also hydrolyzes sphingosylphosphocholine. Hydrolyze 1-acyl-2-lyso-sn-glycero-3-phosphocholine (lyso-PC) and 1-O-alkyl-2-lyso-sn-glycero-3-phosphocholine (lyso-platelet-activating factor). The sequence is that of Sphingomyelin phosphodiesterase 2 (Smpd2) from Rattus norvegicus (Rat).